The chain runs to 106 residues: NADH dehydrogenase [ubiquinone] iron-sulfur protein 5 (106 aa).

Residues 30–74 enclose the CHCH domain; that stretch reads PSRCHAFEKEWIECAHGIGSIRAEKECKIEFEDFRECLLRQKTMK. Short sequence motifs (cx9C motif) lie at residues 33 to 43 and 56 to 66; these read CHAFEKEWIEC and CKIEFEDFREC. 2 cysteine pairs are disulfide-bonded: cysteine 33/cysteine 66 and cysteine 43/cysteine 56. Residues 84-106 are disordered; the sequence is EKLIKEGKYTPPPHHSGQEEPRS.

This sequence belongs to the complex I NDUFS5 subunit family. As to quaternary structure, mammalian complex I is composed of 45 different subunits. This is a component of the iron-sulfur (IP) fragment of the enzyme.

Its subcellular location is the mitochondrion inner membrane. The protein localises to the mitochondrion intermembrane space. Accessory subunit of the mitochondrial membrane respiratory chain NADH dehydrogenase (Complex I), that is believed not to be involved in catalysis. Complex I functions in the transfer of electrons from NADH to the respiratory chain. The immediate electron acceptor for the enzyme is believed to be ubiquinone. In Bos taurus (Bovine), this protein is NADH dehydrogenase [ubiquinone] iron-sulfur protein 5 (NDUFS5).